The sequence spans 127 residues: Fluoride-specific ion channel FluC (127 aa).

Helical transmembrane passes span 4–24 (LLLAVFIGGGTGSVARWFLSM), 35–55 (LGTLTANLIGAFIIGVGLAWF), 71–91 (TGFCGGLTTFSTFSAEVVFLL), and 103–123 (IAVNMLGSFAMTALAFWLFSA). The Na(+) site is built by Gly75 and Thr78.

It belongs to the fluoride channel Fluc/FEX (TC 1.A.43) family.

It is found in the cell inner membrane. It carries out the reaction fluoride(in) = fluoride(out). Na(+) is not transported, but it plays an essential structural role and its presence is essential for fluoride channel function. Fluoride-specific ion channel. Important for reducing fluoride concentration in the cell, thus reducing its toxicity. In Enterobacter sp. (strain 638), this protein is Fluoride-specific ion channel FluC.